Here is a 79-residue protein sequence, read N- to C-terminus: D-alanyl carrier protein (79 aa).

The region spanning 2–79 (AEFKEQVLDI…MVIKKLEEIR (78 aa)) is the Carrier domain. The residue at position 37 (Ser-37) is an O-(pantetheine 4'-phosphoryl)serine.

The protein belongs to the DltC family. 4'-phosphopantetheine is transferred from CoA to a specific serine of apo-DCP.

It is found in the cytoplasm. It functions in the pathway cell wall biogenesis; lipoteichoic acid biosynthesis. In terms of biological role, carrier protein involved in the D-alanylation of lipoteichoic acid (LTA). The loading of thioester-linked D-alanine onto DltC is catalyzed by D-alanine--D-alanyl carrier protein ligase DltA. The DltC-carried D-alanyl group is further transferred to cell membrane phosphatidylglycerol (PG) by forming an ester bond, probably catalyzed by DltD. D-alanylation of LTA plays an important role in modulating the properties of the cell wall in Gram-positive bacteria, influencing the net charge of the cell wall. In Bacillus mycoides (strain KBAB4) (Bacillus weihenstephanensis), this protein is D-alanyl carrier protein.